Consider the following 460-residue polypeptide: NADH-ubiquinone oxidoreductase chain 4 (460 aa).

12 helical membrane passes run 20 to 42 (PKWL…LTWL), 61 to 81 (PLST…VLAS), 93 to 113 (QRLY…AFGA), 114 to 134 (TEII…LIII), 148 to 168 (TYFL…LLLL), 195 to 215 (IWWA…GVHL), 225 to 245 (PVAG…YGMM), 258 to 278 (LAYP…SICL), 285 to 304 (SLIA…GILI), 309 to 331 (GFTG…FCLA), 351 to 371 (MIFP…LALP), and 394 to 414 (IILT…LFLM).

It belongs to the complex I subunit 4 family.

It is found in the mitochondrion membrane. It carries out the reaction a ubiquinone + NADH + 5 H(+)(in) = a ubiquinol + NAD(+) + 4 H(+)(out). Its function is as follows. Core subunit of the mitochondrial membrane respiratory chain NADH dehydrogenase (Complex I) that is believed to belong to the minimal assembly required for catalysis. Complex I functions in the transfer of electrons from NADH to the respiratory chain. The immediate electron acceptor for the enzyme is believed to be ubiquinone. The sequence is that of NADH-ubiquinone oxidoreductase chain 4 (MT-ND4) from Formosania lacustris (Oriental stream loach).